Here is a 263-residue protein sequence, read N- to C-terminus: Alpha-tubulin N-acetyltransferase 2 (263 aa).

An N-acetyltransferase domain is found at 1–181 (MEIAFDLSSI…NKYAVFPNFF (181 aa)). 115-128 (FFIVPTEQRSGNGF) is a binding site for acetyl-CoA. Disordered stretches follow at residues 191–224 (TPRQ…RPRH) and 236–263 (FPRG…EPIW). Residues 200 to 212 (RASSAVSSHTTSR) are compositionally biased toward low complexity. The span at 253-263 (LTRDQRHEPIW) shows a compositional bias: basic and acidic residues.

It belongs to the acetyltransferase ATAT1 family.

The catalysed reaction is L-lysyl-[alpha-tubulin] + acetyl-CoA = N(6)-acetyl-L-lysyl-[alpha-tubulin] + CoA + H(+). Its function is as follows. Specifically acetylates 'Lys-40' in alpha-tubulin/mec-12 on the lumenal side of microtubules. Promotes microtubule destabilization and accelerates microtubule dynamics; this activity may be independent of acetylation activity. Acetylates alpha-tubulin with a slow enzymatic rate, due to a catalytic site that is not optimized for acetyl transfer. Enters the microtubule through each end and diffuses quickly throughout the lumen of microtubules. Acetylates only long/old microtubules because of its slow acetylation rate since it does not have time to act on dynamically unstable microtubules before the enzyme is released. Required for the maintenance of touch receptor neurons and possibly other type of neurons involved in locomotion. In Caenorhabditis briggsae, this protein is Alpha-tubulin N-acetyltransferase 2 (atat-2).